The chain runs to 373 residues: Alpha-1,3-mannosyl-glycoprotein 4-beta-N-acetylglucosaminyltransferase-like protein MGAT4D (373 aa).

Residues 1–5 (MKAKN) lie on the Cytoplasmic side of the membrane. The helical; Signal-anchor for type II membrane protein transmembrane segment at 6-26 (VNLLFAFVAVLLFGFSCFCIS) threads the bilayer. The Lumenal segment spans residues 27-373 (RMNQTNNQLI…REQHLKDNYY (347 aa)). N-linked (GlcNAc...) asparagine glycans are attached at residues Asn29, Asn54, and Asn144.

Belongs to the glycosyltransferase 54 family. In terms of assembly, isoform 2 self-associates; specifically in the endoplasmic reticulum prior to its translocation to the Golgi. Isoform 1 and isoform 2 interact with MGAT1, MGAT3 and MAN2A2; isoform 2 interacts specifically with MGAT1 in the Golgi. Post-translationally, isoform 2 is N-glycosylated; consisting of high-mannose and/or hybrid glycans. As to expression, isoform 1 and isoform 2 are specifically expressed in testis. Isoform 2 is expressed in spermatocytes but not in spermatids. Isoform 1 is expressed in spermatids.

Its subcellular location is the endoplasmic reticulum membrane. The protein resides in the endoplasmic reticulum-Golgi intermediate compartment membrane. The protein localises to the golgi apparatus membrane. In terms of biological role, may play a role in male spermatogenesis. In vitro acts as inhibitor of MGAT1 activity causing cell surface proteins to carry mainly high mannose N-glycans. The function is mediated by its lumenal domain and occurs specifically in the Golgi. A catalytic glucosyltransferase activity is not detected. May be involved in regulation of Sertoli-germ cell interactions during specific stages of spermatogenesis. The chain is Alpha-1,3-mannosyl-glycoprotein 4-beta-N-acetylglucosaminyltransferase-like protein MGAT4D from Mus musculus (Mouse).